Here is a 354-residue protein sequence, read N- to C-terminus: Guanine nucleotide-binding protein G(i) subunit alpha-3 (354 aa).

Residue glycine 2 is the site of N-myristoyl glycine attachment. Cysteine 3 carries the S-palmitoyl cysteine lipid modification. The G-alpha domain occupies 32-354; it reads KEVKLLLLGA…KNNLKECGLY (323 aa). The segment at 35 to 48 is G1 motif; it reads KLLLLGAGESGKST. Positions 42, 43, 44, 45, 46, 47, 48, 150, 151, 175, 176, 177, 178, 179, 180, 181, 201, 203, 269, 270, 272, 273, 325, 326, and 327 each coordinate GTP. Serine 47 serves as a coordination point for Mg(2+). The tract at residues 173 to 181 is G2 motif; that stretch reads DVLRTRVKT. Position 181 (threonine 181) interacts with Mg(2+). Residues 196–205 are G3 motif; it reads FKMFDVGGQR. A G4 motif region spans residues 265-272; the sequence is ILFLNKKD. The interval 324 to 329 is G5 motif; that stretch reads TCATDT.

Belongs to the G-alpha family. G(i/o/t/z) subfamily. Heterotrimeric G proteins are composed of 3 units; alpha, beta and gamma. The alpha subunit contains the guanine nucleotide binding site. GTP binding causes dissociation of the heterotrimer, liberating the individual subunits so that they can interact with downstream effector proteins. Forms a complex with CCDC88A/GIV and EGFR which leads to enhanced EGFR signaling and triggering of cell migration; ligand stimulation is required for recruitment of GNAI3 to the complex. Interacts (inactive GDP-bound form) with CCDC88A/GIV (via GBA motif); the interaction leads to activation of GNAI3. Interacts (inactive GDP-bound form) with CCDC88C/DAPLE (via GBA motif); the interaction leads to activation of GNAI3. Interacts (inactive GDP-bound form) with NUCB1 (via GBA motif) and NUCB2 (via GBA motif); the interaction leads to activation of GNAI3. Interacts (inactive GDP-bound form) with PLCD4 (via GBA motif); the interaction leads to activation of GNAI3. Interacts with INSR; the interaction is probably mediated by CCDC88A/GIV. Interacts with GPSM1. Interacts (GDP-bound form) with GPSM2 (via GoLoco domains). Does not interact with RGS2. Interacts with RGS8 and RGS10; this strongly enhances the intrinsic GTPase activity. Interacts with RGS16; this strongly enhances the intrinsic GTPase activity. Interacts with RGS12. Interacts (via active GTP- or inactive GDP-bound form) with RGS14. Interacts (via active GTP-bound form) with TRPC5 (via ANK repeats) in a homotetrameric ion channel; the interaction is direct and activates the channel activity.

Its subcellular location is the cytoplasm. The protein localises to the cell membrane. It is found in the cytoskeleton. It localises to the microtubule organizing center. The protein resides in the centrosome. Heterotrimeric guanine nucleotide-binding proteins (G proteins) function as transducers downstream of G protein-coupled receptors (GPCRs) in numerous signaling cascades. The alpha chain contains the guanine nucleotide binding site and alternates between an active, GTP-bound state and an inactive, GDP-bound state. Signaling by an activated GPCR promotes GDP release and GTP binding. The alpha subunit has a low GTPase activity that converts bound GTP to GDP, thereby terminating the signal. Both GDP release and GTP hydrolysis are modulated by numerous regulatory proteins. Signaling is mediated via effector proteins, such as adenylate cyclase. Inhibits adenylate cyclase activity, leading to decreased intracellular cAMP levels. Stimulates the activity of receptor-regulated K(+) channels. The active GTP-bound form prevents the association of RGS14 with centrosomes and is required for the translocation of RGS14 from the cytoplasm to the plasma membrane. May play a role in cell division. The active GTP-bound form activates the calcium permeant TRPC5 ion channels. In Cricetulus griseus (Chinese hamster), this protein is Guanine nucleotide-binding protein G(i) subunit alpha-3 (GNAI3).